A 396-amino-acid polypeptide reads, in one-letter code: N-acetylglucosamine-6-phosphate deacetylase (396 aa).

Fe cation contacts are provided by His-63, His-65, and Glu-136. 147-148 (AQ) contacts substrate. 2 residues coordinate Fe cation: His-202 and His-223. Substrate-binding positions include 226-227 (NA), Arg-234, and 255-258 (DGIH). Asp-281 provides a ligand contact to Fe cation. Catalysis depends on Asp-281, which acts as the Proton donor. Residue 314 to 316 (LAG) participates in substrate binding.

This sequence belongs to the metallo-dependent hydrolases superfamily. NagA family. Homodimer. The cofactor is a divalent metal cation.

It carries out the reaction N-acetyl-D-glucosamine 6-phosphate + H2O = D-glucosamine 6-phosphate + acetate. It participates in amino-sugar metabolism; N-acetylneuraminate degradation; D-fructose 6-phosphate from N-acetylneuraminate: step 4/5. Its function is as follows. Involved in the first committed step in the biosynthesis of amino-sugar-nucleotides. Catalyzes the hydrolysis of the N-acetyl group of N-acetylglucosamine-6-phosphate (GlcNAc-6-P) to yield glucosamine 6-phosphate and acetate. Essential for growth on N-acetylglucosamine. This Bacillus subtilis (strain 168) protein is N-acetylglucosamine-6-phosphate deacetylase (nagA).